The chain runs to 232 residues: Enolase-phosphatase E1 (232 aa).

Belongs to the HAD-like hydrolase superfamily. MasA/MtnC family. As to quaternary structure, monomer. It depends on Mg(2+) as a cofactor.

It carries out the reaction 5-methylsulfanyl-2,3-dioxopentyl phosphate + H2O = 1,2-dihydroxy-5-(methylsulfanyl)pent-1-en-3-one + phosphate. The protein operates within amino-acid biosynthesis; L-methionine biosynthesis via salvage pathway; L-methionine from S-methyl-5-thio-alpha-D-ribose 1-phosphate: step 3/6. It functions in the pathway amino-acid biosynthesis; L-methionine biosynthesis via salvage pathway; L-methionine from S-methyl-5-thio-alpha-D-ribose 1-phosphate: step 4/6. Bifunctional enzyme that catalyzes the enolization of 2,3-diketo-5-methylthiopentyl-1-phosphate (DK-MTP-1-P) into the intermediate 2-hydroxy-3-keto-5-methylthiopentenyl-1-phosphate (HK-MTPenyl-1-P), which is then dephosphorylated to form the acireductone 1,2-dihydroxy-3-keto-5-methylthiopentene (DHK-MTPene). This Xylella fastidiosa (strain 9a5c) protein is Enolase-phosphatase E1.